Reading from the N-terminus, the 461-residue chain is Asparagine--tRNA ligase (461 aa).

The protein belongs to the class-II aminoacyl-tRNA synthetase family. Homodimer.

Its subcellular location is the cytoplasm. The enzyme catalyses tRNA(Asn) + L-asparagine + ATP = L-asparaginyl-tRNA(Asn) + AMP + diphosphate + H(+). The polypeptide is Asparagine--tRNA ligase (Geobacter metallireducens (strain ATCC 53774 / DSM 7210 / GS-15)).